The chain runs to 146 residues: Probable NADH dehydrogenase [ubiquinone] 1 alpha subcomplex subunit 12 (146 aa).

It belongs to the complex I NDUFA12 subunit family. In terms of assembly, complex I is composed of 45 different subunits.

The protein localises to the mitochondrion inner membrane. In terms of biological role, accessory subunit of the mitochondrial membrane respiratory chain NADH dehydrogenase (Complex I), that is believed not to be involved in catalysis. Complex I functions in the transfer of electrons from NADH to the respiratory chain. The immediate electron acceptor for the enzyme is believed to be ubiquinone. The polypeptide is Probable NADH dehydrogenase [ubiquinone] 1 alpha subcomplex subunit 12 (Caenorhabditis elegans).